The chain runs to 454 residues: F-box/WD repeat-containing protein 2 (454 aa).

An F-box domain is found at 54–101 (RDFLKLLPLELSFYLLKWLDPQTLLTCCLVSKQWNKVISACTEVWQTA). 4 WD repeats span residues 146 to 183 (GHSA…CVYG), 185 to 221 (QTHT…RTQH), 224 to 265 (GHTG…NTLT), and 276 to 314 (LQQC…NCKC). Lysine 298 is subject to N6-acetyllysine.

In terms of assembly, directly interacts with SKP1 and CUL1.

In terms of biological role, substrate-recognition component of the SCF (SKP1-CUL1-F-box protein)-type E3 ubiquitin ligase complex. The sequence is that of F-box/WD repeat-containing protein 2 from Rattus norvegicus (Rat).